We begin with the raw amino-acid sequence, 105 residues long: MSSGEPTTMTPSPSERTPLLSNGSGGAADDGGTTVTISKPNDGVRRIADSLPLSVWLISTIELCERFAYFGTIAPMQNYIQNPRNDPLRPGGIGKTASTMIYPAV.

Residues 1-15 (MSSGEPTTMTPSPSE) show a composition bias toward polar residues. The tract at residues 1–43 (MSSGEPTTMTPSPSERTPLLSNGSGGAADDGGTTVTISKPNDG) is disordered.

The protein operates within secondary metabolite biosynthesis. In terms of biological role, part of the gene cluster that mediates the biosynthesis of imizoquins A to D, tripeptide-derived alkaloids that serve a protective role against oxidative stress that are essential for normal germination. ImqB is a canonical three-module NRPS that assembles the tripeptide backbone of the imizoquins via condensation of Trp, Tyr, and Leu-derived precursors. N-methylation by imqF and phenol oxidation by imqC, followed by cyclization via the FAD-dependent oxidase imqH carry out the three-step transformation of L-tyrosine into tetrahydroisoquinoline. Importantly, this sequence requires the presence of a free amine in the tyrosine moiety, indicating that isoquinoline formation occurs prior to peptide bond formation. The imidazolidin-4-one ring of imizoquins could form following additional oxidation of the methyl-derived bridgehead carbon by imqH. Lastly, O-methylation by imqG and leucine hydroxylation by imqE complete biosynthesis of the imizoquins. This Aspergillus flavus (strain ATCC 200026 / FGSC A1120 / IAM 13836 / NRRL 3357 / JCM 12722 / SRRC 167) protein is Imizoquin biosynthesis cluster protein I.